The chain runs to 368 residues: tRNA-specific 2-thiouridylase MnmA (368 aa).

ATP contacts are provided by residues 12–19 (GMSGGVDS) and Met38. Residues 98–100 (NPD) are interaction with target base in tRNA. Cys103 acts as the Nucleophile in catalysis. Cys103 and Cys200 are disulfide-bonded. Residue Gly128 participates in ATP binding. Residues 150-152 (KDQ) are interaction with tRNA. The active-site Cysteine persulfide intermediate is the Cys200. Residues 311-312 (RY) form an interaction with tRNA region.

It belongs to the MnmA/TRMU family.

It localises to the cytoplasm. It catalyses the reaction S-sulfanyl-L-cysteinyl-[protein] + uridine(34) in tRNA + AH2 + ATP = 2-thiouridine(34) in tRNA + L-cysteinyl-[protein] + A + AMP + diphosphate + H(+). Functionally, catalyzes the 2-thiolation of uridine at the wobble position (U34) of tRNA, leading to the formation of s(2)U34. The polypeptide is tRNA-specific 2-thiouridylase MnmA (Aeromonas salmonicida (strain A449)).